The following is a 464-amino-acid chain: MNKKAMAAAVSMILAGGAHAAQQERPNVIVIIADDMGYSDISPFGGEIPTPNLQAMAEQGMRMSQYYTSPMSAPARSMLLTGNSNQQAGMGGMWWYDSTIGKEGYELRLTDRVTTMAERFKDAGYNTLMAGKWHLGFVPGATPKDRGFNHAFAFMGGGTSHFNDAIPLGTVEAFHTYYTRDGERVSLPDDFYSSEAYARQMNSWIKATPKEQPVFAWLAFTAPHDPLQAPDEWIKRFKGQYEQGYAEVYRQRIARLKALGIIHDDTPLPHLELDKEWEALTPEQQKYTAKVMQVYAAMIANMDAQIGTLMETLKQTGRDKNTLLVFLTDNGANPAQGFYYESTPEFWKQFDNSYDNVGRKGSFVSYGPHWANVSNAPYANYHKTTSAQGGINTDFMISGPGITRHGKIDASTMAVYDVAPTLYEFAGIDPNKSLAKKPVLPMIGVSLSAISPAKYRSRRAELRG.

A signal peptide spans 1 to 20 (MNKKAMAAAVSMILAGGAHA). 3 residues coordinate Ca(2+): Asp-34, Asp-35, and Ser-72. Catalysis depends on Ser-72, which acts as the Nucleophile. At Ser-72 the chain carries 3-oxoalanine (Ser). Residue His-134 is part of the active site. Ca(2+)-binding residues include Asp-329 and Asn-330.

It belongs to the sulfatase family. The cofactor is Ca(2+). In terms of processing, the conversion to 3-oxoalanine (also known as C-formylglycine, FGly), of a serine or cysteine residue in prokaryotes and of a cysteine residue in eukaryotes, is critical for catalytic activity.

The protein localises to the periplasm. The catalysed reaction is an aryl sulfate + H2O = a phenol + sulfate + H(+). Its function is as follows. Plays an important role in the mineralization of sulfates. This is Arylsulfatase (atsA) from Klebsiella aerogenes (Enterobacter aerogenes).